The following is a 345-amino-acid chain: 3-dehydroquinate synthase (345 aa).

Residues 86 to 90 (GALLD), 110 to 111 (TT), K123, and K132 contribute to the NAD(+) site. Zn(2+)-binding residues include E165, H229, and H243.

It belongs to the sugar phosphate cyclases superfamily. Dehydroquinate synthase family. The cofactor is NAD(+). Co(2+) is required as a cofactor. Zn(2+) serves as cofactor.

It is found in the cytoplasm. The enzyme catalyses 7-phospho-2-dehydro-3-deoxy-D-arabino-heptonate = 3-dehydroquinate + phosphate. Its pathway is metabolic intermediate biosynthesis; chorismate biosynthesis; chorismate from D-erythrose 4-phosphate and phosphoenolpyruvate: step 2/7. In terms of biological role, catalyzes the conversion of 3-deoxy-D-arabino-heptulosonate 7-phosphate (DAHP) to dehydroquinate (DHQ). This Pyrobaculum aerophilum (strain ATCC 51768 / DSM 7523 / JCM 9630 / CIP 104966 / NBRC 100827 / IM2) protein is 3-dehydroquinate synthase.